Here is a 483-residue protein sequence, read N- to C-terminus: Isocitrate dehydrogenase [NADP] (483 aa).

Thr-74 lines the NADP(+) pocket. The D-threo-isocitrate site is built by Ser-83, Asn-85, Arg-89, Arg-99, and Arg-121. Asp-232 contacts Mg(2+). NADP(+) contacts are provided by residues 264 to 270 (HGSAPDI) and Asn-277.

It belongs to the isocitrate and isopropylmalate dehydrogenases family. Homodimer. It depends on Mg(2+) as a cofactor. The cofactor is Mn(2+).

The enzyme catalyses D-threo-isocitrate + NADP(+) = 2-oxoglutarate + CO2 + NADPH. In terms of biological role, catalyzes the oxidative decarboxylation of isocitrate to 2-oxoglutarate and carbon dioxide with the concomitant reduction of NADP(+). The chain is Isocitrate dehydrogenase [NADP] (icd) from Rickettsia bellii (strain RML369-C).